A 425-amino-acid polypeptide reads, in one-letter code: Glutamate-1-semialdehyde 2,1-aminomutase (425 aa).

Lys265 carries the post-translational modification N6-(pyridoxal phosphate)lysine.

The protein belongs to the class-III pyridoxal-phosphate-dependent aminotransferase family. HemL subfamily. As to quaternary structure, homodimer. Pyridoxal 5'-phosphate is required as a cofactor.

It is found in the cytoplasm. It catalyses the reaction (S)-4-amino-5-oxopentanoate = 5-aminolevulinate. Its pathway is porphyrin-containing compound metabolism; protoporphyrin-IX biosynthesis; 5-aminolevulinate from L-glutamyl-tRNA(Glu): step 2/2. The protein is Glutamate-1-semialdehyde 2,1-aminomutase of Desulfatibacillum aliphaticivorans.